A 417-amino-acid chain; its full sequence is Adenylosuccinate synthetase (417 aa).

Residues 11–17 (GDEGKGK) and 39–41 (GHT) each bind GTP. Catalysis depends on Asp12, which acts as the Proton acceptor. Mg(2+) contacts are provided by Asp12 and Gly39. Residues 12-15 (DEGK), 37-40 (NAGH), Thr126, Arg140, Gln218, Thr233, and Arg295 contribute to the IMP site. Catalysis depends on His40, which acts as the Proton donor. 291 to 297 (TVSGRIR) lines the substrate pocket. GTP-binding positions include Arg297, 323-325 (KLD), and 406-408 (SNG).

The protein belongs to the adenylosuccinate synthetase family. In terms of assembly, homodimer. Mg(2+) serves as cofactor.

The protein resides in the cytoplasm. It catalyses the reaction IMP + L-aspartate + GTP = N(6)-(1,2-dicarboxyethyl)-AMP + GDP + phosphate + 2 H(+). It participates in purine metabolism; AMP biosynthesis via de novo pathway; AMP from IMP: step 1/2. Functionally, plays an important role in the de novo pathway of purine nucleotide biosynthesis. Catalyzes the first committed step in the biosynthesis of AMP from IMP. In Neorickettsia sennetsu (strain ATCC VR-367 / Miyayama) (Ehrlichia sennetsu), this protein is Adenylosuccinate synthetase.